The sequence spans 286 residues: MPSYEARANVHKSAFAARVLKLVAAKKTNLCASLDVTTTKELIELADKVGPYVCMIKTHIDIIDDFTYAGTVLPLKELALKHGFFLFEDRKFADIGNTVKHQYKNGVYRIAEWSDITNAHGVPGTGIIAGLRAGAEETVSEQKKEDVSDYENSQYKEFLVPSPNEKLARGLLMLAELSCKGSLATGEYSKQTIELARSDPEFVVGFIAQNRPKGDSEDWLILTPGVGLDDKGDALGQQYRTVEDVMSTGTDIIIVGRGLYGQNRDPIEEAKRYQKAGWEAYQKINC.

Residues D35, 57 to 59, 89 to 98, Y239, and R257 each bind substrate; these read KTH and DRKFADIGNT. Residue K91 is the Proton donor of the active site.

The protein belongs to the OMP decarboxylase family.

It carries out the reaction orotidine 5'-phosphate + H(+) = UMP + CO2. The protein operates within pyrimidine metabolism; UMP biosynthesis via de novo pathway; UMP from orotate: step 2/2. In Yarrowia lipolytica (strain CLIB 122 / E 150) (Yeast), this protein is Orotidine 5'-phosphate decarboxylase (URA3).